A 3066-amino-acid chain; its full sequence is Serine-protein kinase ATM (3066 aa).

Ser2 carries the N-acetylserine modification. The residue at position 367 (Ser367) is a Phosphoserine; by autocatalysis. A disordered region spans residues 829 to 862 (LDHGVHPGEDDEDGGGCDSLMEAEGPSSTGLSTA). Residues 1380-1389 (DPAPNPPYFP) form an interaction with ABL1 region. Ser1899 carries the phosphoserine; by autocatalysis modification. Positions 1946–2576 (EVAKVAQSCS…LFIILALANA (631 aa)) constitute an FAT domain. The segment covering 1973 to 1982 (TDEQEKRSPT) has biased composition (basic and acidic residues). Disordered stretches follow at residues 1973–2000 (TDEQ…EKSK) and 2585–2607 (PETT…LDED). A compositionally biased stretch (polar residues) spans 1985-1996 (EGSQGTTISSLS). Ser1987 carries the post-translational modification Phosphoserine; by autocatalysis. Over residues 2597–2607 (TSKENSHLDED) the composition is skewed to basic and acidic residues. Positions 2696–3009 (FKTEFRLAGG…ECKQSLSDTD (314 aa)) constitute a PI3K/PI4K catalytic domain. The interval 2702–2708 (LAGGLNL) is G-loop. The interval 2877–2885 (GLGDRHVQN) is catalytic loop. The interval 2897–2921 (HIDLGVAFEQGKILPTPETVPFRLS) is activation loop. The segment at 2986–3007 (DESDLHSTPNADDQECKQSLSD) is disordered. The span at 2991–3007 (HSTPNADDQECKQSLSD) shows a compositional bias: polar residues. A Phosphoserine modification is found at Ser3006. Lys3026 carries the N6-acetyllysine modification. Residues 3034–3066 (TVLSVGGQVNLLIQQAMDPKNLSRLFPGWKAWV) form the FATC domain. Positions 3056-3058 (SRL) match the Microbody targeting signal; atypical motif.

Belongs to the PI3/PI4-kinase family. ATM subfamily. Homodimer. Dimers or tetramers in inactive state. On DNA damage, autophosphorylation dissociates ATM into monomers rendering them catalytically active. Binds p53/TP53, ABL1, BRCA1 and TERF1. Interacts with NBN (via FxF/Y motif). Part of the BRCA1-associated genome surveillance complex (BASC), which contains BRCA1, MSH2, MSH6, MLH1, ATM, BLM, PMS2 and the RAD50-MRE11-NBN protein complex. This association could be a dynamic process changing throughout the cell cycle and within subnuclear domains. Interacts with RAD17; DNA damage promotes the association. Interacts with EEF1E1; the interaction, induced on DNA damage, up-regulates TP53. Interacts with KAT8, NABP2, ATMIN and CEP164. Interacts with AP2B1 and AP3B2; the interaction occurs in cytoplasmic vesicles. Interacts with TELO2 and TTI1. Interacts with DDX1. Interacts with BRAT1. Interacts with CYREN (via XLF motif). Interacts (via microbody targeting signal) with PEX5; promoting translocation to peroxisomes in response to reactive oxygen species (ROS). In terms of processing, phosphorylated by NUAK1/ARK5. Autophosphorylation on Ser-367, Ser-1899, Ser-1987 correlates with DNA damage-mediated activation of the kinase. Phosphorylated by NUAK1/ARK5. Autophosphorylation on Ser-367, Ser-1899, Ser-1987 correlates with DNA damage-mediated activation of the kinase. During the late stages of DNA damage response, dephosphorylated following deacetylation by SIRT7, leading to ATM deactivation. Post-translationally, acetylation, on DNA damage, is required for activation of the kinase activity, dimer-monomer transition, and subsequent autophosphorylation on Ser-1987. Acetylated in vitro by KAT5/TIP60. Deacetylated by SIRT7 during the late stages of DNA damage response, promoting ATM dephosphorylation and subsequent deactivation. As to expression, expressed in brain, skeletal muscle, testis, followed by spleen, lung, kidney, heart, liver and thymus. Ubiquitously expressed in embryonal tissues.

The protein localises to the nucleus. The protein resides in the cytoplasmic vesicle. Its subcellular location is the cytoplasm. It is found in the cytoskeleton. It localises to the microtubule organizing center. The protein localises to the centrosome. The protein resides in the peroxisome matrix. It carries out the reaction L-seryl-[protein] + ATP = O-phospho-L-seryl-[protein] + ADP + H(+). The enzyme catalyses L-threonyl-[protein] + ATP = O-phospho-L-threonyl-[protein] + ADP + H(+). Its activity is regulated as follows. Activated by the MRN (MRE11-RAD50-NBS1) complex in response to DNA double strand breaks (DSBs), which recruits ATM to DSBs and promotes its activation. Inhibited by wortmannin. Functionally, serine/threonine protein kinase which activates checkpoint signaling upon double strand breaks (DSBs), apoptosis and genotoxic stresses such as ionizing ultraviolet A light (UVA), thereby acting as a DNA damage sensor. Recognizes the substrate consensus sequence [ST]-Q. Phosphorylates 'Ser-139' of histone variant H2AX at double strand breaks (DSBs), thereby regulating DNA damage response mechanism. Also plays a role in pre-B cell allelic exclusion, a process leading to expression of a single immunoglobulin heavy chain allele to enforce clonality and monospecific recognition by the B-cell antigen receptor (BCR) expressed on individual B-lymphocytes. After the introduction of DNA breaks by the RAG complex on one immunoglobulin allele, acts by mediating a repositioning of the second allele to pericentromeric heterochromatin, preventing accessibility to the RAG complex and recombination of the second allele. Also involved in signal transduction and cell cycle control. May function as a tumor suppressor. Necessary for activation of ABL1 and SAPK. Phosphorylates DYRK2, CHEK2, p53/TP53, FBXW7, FANCD2, NFKBIA, BRCA1, CREBBP/CBP, RBBP8/CTIP, FBXO46, MRE11, nibrin (NBN), RAD50, RAD17, PELI1, TERF1, UFL1, RAD9, UBQLN4 and DCLRE1C. May play a role in vesicle and/or protein transport. Could play a role in T-cell development, gonad and neurological function. Binds DNA ends. Plays a role in replication-dependent histone mRNA degradation. Phosphorylation of DYRK2 in nucleus in response to genotoxic stress prevents its MDM2-mediated ubiquitination and subsequent proteasome degradation. Phosphorylates ATF2 which stimulates its function in DNA damage response. Phosphorylates ERCC6 which is essential for its chromatin remodeling activity at DNA double-strand breaks. Phosphorylates TTC5/STRAP at 'Ser-203' in the cytoplasm in response to DNA damage, which promotes TTC5/STRAP nuclear localization. Also involved in pexophagy by mediating phosphorylation of PEX5: translocated to peroxisomes in response to reactive oxygen species (ROS), and catalyzes phosphorylation of PEX5, promoting PEX5 ubiquitination and induction of pexophagy. This Mus musculus (Mouse) protein is Serine-protein kinase ATM (Atm).